The sequence spans 550 residues: Retron Ec78 probable ATPase (550 aa).

An ATP-binding motif is present at residues 93-100 (GNNGKGKT).

Its function is as follows. Probable ATPase component of antiviral defense system retron Ec78, composed of a non-coding RNA (ncRNA), a reverse transcriptase (RT), this protein and a putative HNH endonuclease. Expression of retron Ec78 confers protection against bacteriophage T5. At multiplicity of infection (MOI) of 0.02 cultures slow growth when infected with T5 but do not collapse, at MOI 2 cultures enter growth stasis. The chain is Retron Ec78 probable ATPase from Escherichia coli.